Consider the following 634-residue polypeptide: Probable potassium transport system protein Kup (634 aa).

12 helical membrane passes run Ala19 to Leu39, Val62 to Val82, Phe113 to Pro133, Gly150 to Gln170, Ile177 to Val197, Ile225 to Ala245, Trp259 to Leu279, Leu291 to Ile311, Ile349 to Phe369, Tyr379 to Trp399, Leu406 to Ala426, and Val431 to Thr451.

Belongs to the HAK/KUP transporter (TC 2.A.72) family.

Its subcellular location is the cell inner membrane. It carries out the reaction K(+)(in) + H(+)(in) = K(+)(out) + H(+)(out). Transport of potassium into the cell. Likely operates as a K(+):H(+) symporter. The sequence is that of Probable potassium transport system protein Kup from Pseudomonas aeruginosa (strain LESB58).